A 118-amino-acid chain; its full sequence is UPF0148 protein M1627_1409 (118 aa).

The protein belongs to the UPF0148 family.

This chain is UPF0148 protein M1627_1409, found in Saccharolobus islandicus (strain M.16.27) (Sulfolobus islandicus).